Reading from the N-terminus, the 233-residue chain is Probable transglycosylase IsaA (233 aa).

A signal peptide spans 1-29 (MKKTIMASSLAVALGVTGYAASTGHEAHA).

This sequence belongs to the transglycosylase family. IsaA subfamily.

It localises to the secreted. Is able to cleave peptidoglycan. The chain is Probable transglycosylase IsaA (isaA) from Staphylococcus aureus (strain bovine RF122 / ET3-1).